We begin with the raw amino-acid sequence, 476 residues long: Argininosuccinate lyase (476 aa).

This sequence belongs to the lyase 1 family. Argininosuccinate lyase subfamily.

Its subcellular location is the cytoplasm. It carries out the reaction 2-(N(omega)-L-arginino)succinate = fumarate + L-arginine. The protein operates within amino-acid biosynthesis; L-arginine biosynthesis; L-arginine from L-ornithine and carbamoyl phosphate: step 3/3. This is Argininosuccinate lyase from Gluconacetobacter diazotrophicus (strain ATCC 49037 / DSM 5601 / CCUG 37298 / CIP 103539 / LMG 7603 / PAl5).